The primary structure comprises 206 residues: ATP phosphoribosyltransferase (206 aa).

It belongs to the ATP phosphoribosyltransferase family. Short subfamily. Heteromultimer composed of HisG and HisZ subunits.

The protein resides in the cytoplasm. It catalyses the reaction 1-(5-phospho-beta-D-ribosyl)-ATP + diphosphate = 5-phospho-alpha-D-ribose 1-diphosphate + ATP. It functions in the pathway amino-acid biosynthesis; L-histidine biosynthesis; L-histidine from 5-phospho-alpha-D-ribose 1-diphosphate: step 1/9. Catalyzes the condensation of ATP and 5-phosphoribose 1-diphosphate to form N'-(5'-phosphoribosyl)-ATP (PR-ATP). Has a crucial role in the pathway because the rate of histidine biosynthesis seems to be controlled primarily by regulation of HisG enzymatic activity. The chain is ATP phosphoribosyltransferase from Campylobacter curvus (strain 525.92).